A 502-amino-acid polypeptide reads, in one-letter code: Probable glycine dehydrogenase (decarboxylating) subunit 2 (502 aa).

Position 273 is an N6-(pyridoxal phosphate)lysine (lysine 273).

It belongs to the GcvP family. C-terminal subunit subfamily. As to quaternary structure, the glycine cleavage system is composed of four proteins: P, T, L and H. In this organism, the P 'protein' is a heterodimer of two subunits. Pyridoxal 5'-phosphate is required as a cofactor.

It carries out the reaction N(6)-[(R)-lipoyl]-L-lysyl-[glycine-cleavage complex H protein] + glycine + H(+) = N(6)-[(R)-S(8)-aminomethyldihydrolipoyl]-L-lysyl-[glycine-cleavage complex H protein] + CO2. Functionally, the glycine cleavage system catalyzes the degradation of glycine. The P protein binds the alpha-amino group of glycine through its pyridoxal phosphate cofactor; CO(2) is released and the remaining methylamine moiety is then transferred to the lipoamide cofactor of the H protein. The protein is Probable glycine dehydrogenase (decarboxylating) subunit 2 of Thermococcus gammatolerans (strain DSM 15229 / JCM 11827 / EJ3).